A 3419-amino-acid chain; its full sequence is Utrophin (3419 aa).

The segment at 1-246 is actin-binding; that stretch reads MAKYGHLEAS…LPDKKSIIMY (246 aa). Tyr4 carries the phosphotyrosine modification. Position 10 is a phosphoserine (Ser10). 2 Calponin-homology (CH) domains span residues 31–135 and 150–255; these read DVQK…LHWQ and TNSE…EVLP. The interaction with SYNM stretch occupies residues 268–905; it reads TLPRKYKKEC…YQQQLENELK (638 aa). Ser295 bears the Phosphoserine mark. 17 Spectrin repeats span residues 312 to 416, 421 to 525, 532 to 636, 690 to 795, 801 to 901, 910 to 1012, 1019 to 1121, 1128 to 1229, 1236 to 1333, 1335 to 1436, 1438 to 1540, 1547 to 1648, 1653 to 1747, 1748 to 1840, 1841 to 1958, 1969 to 2070, and 2077 to 2176; these read DSYQ…SRLH, ELQK…NRLQ, QELL…NQVT, KKFD…RKIQ, NAYF…QQLE, PAYL…RSLE, RDFK…SRLS, MNLK…HTLE, VELL…ISLE, QLQV…LFQK, ANFE…QDLE, RKLK…NTLL, QLEV…INSA, QMLI…KIKA, IPQR…SDRR, KQFH…PRLK, and SGYR…KTRT. Positions 1336 to 1761 are interaction with SYNM; sequence LQVLRETDHM…GQDPAGTVEA (426 aa). The residue at position 1998 (Ser1998) is a Phosphoserine. Residue Ser2201 is modified to Phosphoserine. Spectrin repeat units lie at residues 2216–2319, 2336–2426, 2433–2542, 2549–2674, and 2681–2783; these read ADLD…QQLE, EELM…SALE, QTSR…AHLE, NRLL…KQVG, and RDLQ…KQLQ. The interval 2616–2640 is disordered; it reads DQPIEAPEEPRRNPQSKTELTPEER. The interval 2785–3152 is interaction with SYNM; it reads AHRDFGPSSQ…TVLEGDNLET (368 aa). In terms of domain architecture, WW spans 2799 to 2832; the sequence is TSVQLPWQRSISHNKVPYYINHQTQTTCWDHPKM. Residues 3052–3108 form a ZZ-type; degenerate zinc finger; that stretch reads KHQAKCNICKECPIVGFRYRSLKHFNYDVCQSCFFSGRTAKGHKLHYPMVEYCIPTT. Zn(2+)-binding residues include Cys3057, Cys3060, Cys3081, and Cys3084. Disordered regions lie at residues 3277 to 3296 and 3344 to 3395; these read RRGL…YHTS and DSDS…TDLT. Ser3284 carries the phosphoserine modification.

In terms of assembly, homodimer. Interacts with the syntrophins SNTA1; SNTB1 and SNTB2. Interacts with SYNM. Interacts (via its WWW and ZZ domains) with DAG1 (via the PPXY motif of betaDAG1); the interaction is inhibited by the tyrosine phosphorylation of the PPXY motif of DAG1. Interacts with DTNB. Interacts with PGM5.

It localises to the postsynaptic cell membrane. The protein localises to the cytoplasm. The protein resides in the cytoskeleton. Its function is as follows. May play a role in anchoring the cytoskeleton to the plasma membrane. The polypeptide is Utrophin (Rattus norvegicus (Rat)).